The primary structure comprises 348 residues: NADH-quinone oxidoreductase subunit H (348 aa).

The next 8 helical transmembrane spans lie at 21 to 41 (IAGI…VIYV), 87 to 107 (GIFL…WAVI), 120 to 140 (VGLL…VMAG), 166 to 186 (IGFI…SEIV), 195 to 215 (GIVN…LFFI), 258 to 278 (NILL…LPPI), 288 to 308 (GFLW…WIWA), and 325 to 345 (VFLP…MATG).

It belongs to the complex I subunit 1 family. As to quaternary structure, NDH-1 is composed of 14 different subunits. Subunits NuoA, H, J, K, L, M, N constitute the membrane sector of the complex.

It localises to the cell inner membrane. The catalysed reaction is a quinone + NADH + 5 H(+)(in) = a quinol + NAD(+) + 4 H(+)(out). Functionally, NDH-1 shuttles electrons from NADH, via FMN and iron-sulfur (Fe-S) centers, to quinones in the respiratory chain. The immediate electron acceptor for the enzyme in this species is believed to be ubiquinone. Couples the redox reaction to proton translocation (for every two electrons transferred, four hydrogen ions are translocated across the cytoplasmic membrane), and thus conserves the redox energy in a proton gradient. This subunit may bind ubiquinone. This Erythrobacter litoralis (strain HTCC2594) protein is NADH-quinone oxidoreductase subunit H.